We begin with the raw amino-acid sequence, 83 residues long: Colicin-E5 immunity protein in ColE9 (83 aa).

The polypeptide is Colicin-E5 immunity protein in ColE9 (Escherichia coli).